Reading from the N-terminus, the 115-residue chain is Large ribosomal subunit protein bL19 (115 aa).

This sequence belongs to the bacterial ribosomal protein bL19 family.

In terms of biological role, this protein is located at the 30S-50S ribosomal subunit interface and may play a role in the structure and function of the aminoacyl-tRNA binding site. This is Large ribosomal subunit protein bL19 (rplS) from Thermotoga maritima (strain ATCC 43589 / DSM 3109 / JCM 10099 / NBRC 100826 / MSB8).